Consider the following 219-residue polypeptide: ATP synthase F(0) complex subunit a (219 aa).

A run of 6 helical transmembrane segments spans residues 4–24, 61–81, 90–110, 124–144, 172–192, and 194–214; these read PTYL…ILFP, WAAL…LGLL, QLSL…IIGM, EGTP…SLFI, FVLL…LFLL, and LLEI…LSLY.

It belongs to the ATPase A chain family. Component of the ATP synthase complex composed at least of ATP5F1A/subunit alpha, ATP5F1B/subunit beta, ATP5MC1/subunit c (homooctomer), MT-ATP6/subunit a, MT-ATP8/subunit 8, ATP5ME/subunit e, ATP5MF/subunit f, ATP5MG/subunit g, ATP5MK/subunit k, ATP5MJ/subunit j, ATP5F1C/subunit gamma, ATP5F1D/subunit delta, ATP5F1E/subunit epsilon, ATP5PF/subunit F6, ATP5PB/subunit b, ATP5PD/subunit d, ATP5PO/subunit OSCP. ATP synthase complex consists of a soluble F(1) head domain (subunits alpha(3) and beta(3)) - the catalytic core - and a membrane F(0) domain - the membrane proton channel (subunits c, a, 8, e, f, g, k and j). These two domains are linked by a central stalk (subunits gamma, delta, and epsilon) rotating inside the F1 region and a stationary peripheral stalk (subunits F6, b, d, and OSCP). Interacts with DNAJC30; interaction is direct.

It localises to the mitochondrion inner membrane. The catalysed reaction is H(+)(in) = H(+)(out). Its function is as follows. Subunit a, of the mitochondrial membrane ATP synthase complex (F(1)F(0) ATP synthase or Complex V) that produces ATP from ADP in the presence of a proton gradient across the membrane which is generated by electron transport complexes of the respiratory chain. ATP synthase complex consist of a soluble F(1) head domain - the catalytic core - and a membrane F(1) domain - the membrane proton channel. These two domains are linked by a central stalk rotating inside the F(1) region and a stationary peripheral stalk. During catalysis, ATP synthesis in the catalytic domain of F(1) is coupled via a rotary mechanism of the central stalk subunits to proton translocation. With the subunit c (ATP5MC1), forms the proton-conducting channel in the F(0) domain, that contains two crucial half-channels (inlet and outlet) that facilitate proton movement from the mitochondrial intermembrane space (IMS) into the matrix. Protons are taken up via the inlet half-channel and released through the outlet half-channel, following a Grotthuss mechanism. In Oncorhynchus masou (Cherry salmon), this protein is ATP synthase F(0) complex subunit a.